The primary structure comprises 70 residues: DNA gyrase inhibitor YacG (70 aa).

Positions 20, 23, 35, and 39 each coordinate Zn(2+).

The protein belongs to the DNA gyrase inhibitor YacG family. In terms of assembly, interacts with GyrB. Zn(2+) serves as cofactor.

Inhibits all the catalytic activities of DNA gyrase by preventing its interaction with DNA. Acts by binding directly to the C-terminal domain of GyrB, which probably disrupts DNA binding by the gyrase. This chain is DNA gyrase inhibitor YacG, found in Rhizobium leguminosarum bv. trifolii (strain WSM2304).